The following is a 158-amino-acid chain: Major latex protein 22 (158 aa).

This sequence belongs to the MLP family. As to expression, laticifer.

The protein localises to the vacuole. Its subcellular location is the cytoplasmic vesicle. Its function is as follows. Not known; MLPs constitute up to 50% of the soluble latex protein. The protein is Major latex protein 22 (MLP22) of Papaver somniferum (Opium poppy).